We begin with the raw amino-acid sequence, 327 residues long: uncharacterized protein (327 aa).

Over residues 1 to 17 the composition is skewed to low complexity; that stretch reads MASMAAAIAASRSAVMS. Residues 1 to 22 are disordered; it reads MASMAAAIAASRSAVMSGNRPL. Alanine 2 is modified (N-acetylalanine). Position 37 is a phosphoserine (serine 37). A disordered region spans residues 76-113; that stretch reads GPRAPAPRDPGDSEELTRFPGLRGPTGQKVVRFGDEDL. Residue serine 129 is modified to Phosphoserine. Over residues 134–148 the composition is skewed to polar residues; sequence SISALSIQEPSNGTA. The tract at residues 134–299 is disordered; sequence SISALSIQEP…PDVRQDDGED (166 aa). Residues 162 to 176 show a composition bias toward low complexity; the sequence is SQALKSSQGSRSSSL. Position 175 is a phosphoserine (serine 175). Composition is skewed to basic and acidic residues over residues 182–202 and 233–252; these read TRKEEEASFWKINAERSRGEG and PAPKDREAKVERPSTLRQEQ. The residue at position 289 (serine 289) is a Phosphoserine.

The protein localises to the cytoplasm. This is an uncharacterized protein from Homo sapiens (Human).